A 277-amino-acid polypeptide reads, in one-letter code: Phosphatidylglycerol--prolipoprotein diacylglyceryl transferase (277 aa).

A run of 4 helical transmembrane segments spans residues 15-35 (IHVRWYGIIIACGILLATFMS), 50-70 (IDLLLWGVPIGFIGARIYYVI), 89-109 (GGIAIYGGLIAGAIVLLVFCY), and 112-132 (FLPPFLVLDIVAPGVMAAQVL). Arg-134 contributes to the a 1,2-diacyl-sn-glycero-3-phospho-(1'-sn-glycerol) binding site. Helical transmembrane passes span 174-194 (KPTFLYESFFNLIGLIIILSL), 204-224 (GEVFMLYLAWYSVVRFFVEGM), and 234-254 (VIRVSQALSLLLLIAVVILFV).

It belongs to the Lgt family.

It is found in the cell membrane. The enzyme catalyses L-cysteinyl-[prolipoprotein] + a 1,2-diacyl-sn-glycero-3-phospho-(1'-sn-glycerol) = an S-1,2-diacyl-sn-glyceryl-L-cysteinyl-[prolipoprotein] + sn-glycerol 1-phosphate + H(+). Its pathway is protein modification; lipoprotein biosynthesis (diacylglyceryl transfer). Catalyzes the transfer of the diacylglyceryl group from phosphatidylglycerol to the sulfhydryl group of the N-terminal cysteine of a prolipoprotein, the first step in the formation of mature lipoproteins. In Lactobacillus delbrueckii subsp. bulgaricus (strain ATCC 11842 / DSM 20081 / BCRC 10696 / JCM 1002 / NBRC 13953 / NCIMB 11778 / NCTC 12712 / WDCM 00102 / Lb 14), this protein is Phosphatidylglycerol--prolipoprotein diacylglyceryl transferase.